We begin with the raw amino-acid sequence, 212 residues long: Negative modulator of initiation of replication (212 aa).

2 interaction with DNA regions span residues 113–114 (AV) and 144–148 (RTRVY).

It belongs to the SeqA family. Homodimer. Polymerizes to form helical filaments.

Its subcellular location is the cytoplasm. Functionally, negative regulator of replication initiation, which contributes to regulation of DNA replication and ensures that replication initiation occurs exactly once per chromosome per cell cycle. Binds to pairs of hemimethylated GATC sequences in the oriC region, thus preventing assembly of replication proteins and re-initiation at newly replicated origins. Repression is relieved when the region becomes fully methylated. The sequence is that of Negative modulator of initiation of replication from Actinobacillus succinogenes (strain ATCC 55618 / DSM 22257 / CCUG 43843 / 130Z).